The primary structure comprises 743 residues: Capsid protein (743 aa).

The disordered stretch occupies residues 665–706 (YVPPEEDFNIQERQQREQRPWTSESESEAEAQEETQAGSVRE).

This sequence belongs to the anelloviridae capsid protein family.

It localises to the virion. Functionally, self assemble to form an icosahedral capsid. The polypeptide is Capsid protein (Torque teno virus (isolate Human/China/CT39F/2001) (TTV)).